An 82-amino-acid polypeptide reads, in one-letter code: Cytochrome b559 subunit alpha (82 aa).

Residues 22 to 36 traverse the membrane as a helical segment; sequence VIHFVTLPSIFLAGF. Residue histidine 24 participates in heme binding.

This sequence belongs to the PsbE/PsbF family. Heterodimer of an alpha subunit and a beta subunit. PSII is composed of 1 copy each of membrane proteins PsbA, PsbB, PsbC, PsbD, PsbE, PsbF, PsbH, PsbI, PsbJ, PsbK, PsbL, PsbM, PsbT, PsbX, PsbY, PsbZ, Psb30/Ycf12, peripheral proteins PsbO, CyanoQ (PsbQ), PsbU, PsbV and a large number of cofactors. It forms dimeric complexes. Requires heme b as cofactor.

It is found in the cellular thylakoid membrane. Functionally, this b-type cytochrome is tightly associated with the reaction center of photosystem II (PSII). PSII is a light-driven water:plastoquinone oxidoreductase that uses light energy to abstract electrons from H(2)O, generating O(2) and a proton gradient subsequently used for ATP formation. It consists of a core antenna complex that captures photons, and an electron transfer chain that converts photonic excitation into a charge separation. The protein is Cytochrome b559 subunit alpha of Parasynechococcus marenigrum (strain WH8102).